We begin with the raw amino-acid sequence, 118 residues long: NLVQFTYLIQCANSGKRASYHYADYGCYCGAGGSGTPVDELDRCCKIHDNCYGEAEKMGCYPKLTMYNYYCGTQSPTCDDKTGCQRYVCACDLEAAKCFARSPYNNKNYNIDTSKRCK.

7 disulfides stabilise this stretch: cysteine 11–cysteine 71, cysteine 27–cysteine 117, cysteine 29–cysteine 45, cysteine 44–cysteine 98, cysteine 51–cysteine 91, cysteine 60–cysteine 84, and cysteine 78–cysteine 89. Ca(2+)-binding residues include tyrosine 28, glycine 30, and glycine 32. The active site involves histidine 48. Aspartate 49 lines the Ca(2+) pocket. Aspartate 92 is an active-site residue.

This sequence belongs to the phospholipase A2 family. Group I subfamily. D49 sub-subfamily. In terms of assembly, monomer. Ca(2+) is required as a cofactor. In terms of tissue distribution, expressed by the venom gland.

It localises to the secreted. It carries out the reaction a 1,2-diacyl-sn-glycero-3-phosphocholine + H2O = a 1-acyl-sn-glycero-3-phosphocholine + a fatty acid + H(+). PLA2 catalyzes the calcium-dependent hydrolysis of the 2-acyl groups in 3-sn-phosphoglycerides. The protein is Basic phospholipase A2 3 of Laticauda semifasciata (Black-banded sea krait).